Consider the following 146-residue polypeptide: uncharacterized protein (146 aa).

Residues 67–93 form a disordered region; sequence DDNGMESGFCSGATSTGQSASTSPAPV. Residues 77–92 show a composition bias toward low complexity; the sequence is SGATSTGQSASTSPAP.

This is an uncharacterized protein from Caenorhabditis elegans.